Here is a 207-residue protein sequence, read N- to C-terminus: Protein LURP1 (207 aa).

Belongs to the LOR family. In terms of tissue distribution, limited to discrete pathogen infection sites in leaves.

In terms of biological role, involved in basal defense against virulent oomycetes. Might be related to the phospholipid scramblase and tubby-like superfamily of membrane tethered transcription factors. The polypeptide is Protein LURP1 (LURP1) (Arabidopsis thaliana (Mouse-ear cress)).